Here is a 257-residue protein sequence, read N- to C-terminus: Protein YIPF5 (257 aa).

The Cytoplasmic segment spans residues 1–124 (MSGFDNFNTD…KASDGSIMNE (124 aa)). The chain crosses the membrane as a helical span at residues 125-145 (TDLAGPMVFCLAFGATLLLTG). A topological domain (lumenal) is located at residue Lys-146. A helical transmembrane segment spans residues 147 to 167 (IQFGYVYGISAIGCLGMYCLL). Topologically, residues 168 to 173 (NLMSMT) are cytoplasmic. The chain crosses the membrane as a helical span at residues 174–194 (GVSFGCVASVLGYCLLPMIIL). Topologically, residues 195–196 (SS) are lumenal. The helical transmembrane segment at 197–217 (FGVIFSLQGIMGIILTAAIIG) threads the bilayer. Residues 218–236 (WCSLSASKIFISALAMDGQ) are Cytoplasmic-facing. Residues 237–257 (QLLVAYPCALLYGVFALISVF) form a helical membrane-spanning segment.

It belongs to the YIP1 family.

It localises to the endoplasmic reticulum membrane. The protein resides in the golgi apparatus. It is found in the cis-Golgi network membrane. Functionally, plays a role in transport between endoplasmic reticulum and Golgi. The polypeptide is Protein YIPF5 (yipf5) (Danio rerio (Zebrafish)).